The primary structure comprises 132 residues: Transmembrane protein 170B (132 aa).

Residues Met1–Trp37 lie on the Extracellular side of the membrane. Asn12 carries an N-linked (GlcNAc...) asparagine glycan. Residues Ile38–Phe58 traverse the membrane as a helical segment. At Val59 to Arg68 the chain is on the cytoplasmic side. A helical transmembrane segment spans residues Val69 to Thr89. Residues Ser90–Met104 lie on the Extracellular side of the membrane. A helical transmembrane segment spans residues Ala105–Phe125. Over Ser126–Leu132 the chain is Cytoplasmic.

It belongs to the TMEM170 family. Interacts with CTNNB1.

The protein resides in the cell membrane. This chain is Transmembrane protein 170B, found in Mus musculus (Mouse).